A 1408-amino-acid chain; its full sequence is ARF guanine-nucleotide exchange factor 1 (1408 aa).

Ser-49 is modified (phosphoserine). Positions Thr-262–Pro-287 are disordered. The 155-residue stretch at Phe-552–Asn-706 folds into the SEC7 domain.

In terms of assembly, interacts (via N-terminal region) with SEC21 (via C-terminus). Interacts with GMH1. Interacts with DRS2.

It is found in the cytoplasm. It localises to the cytosol. The protein localises to the membrane. The protein resides in the endoplasmic reticulum. Its subcellular location is the mitochondrion. Activates the ARF proteins by exchanging bound GDP for free GTP. Plays a role in maintaining mitochondrial morphology, and in the turnover of mitochondria through mitophagy. The sequence is that of ARF guanine-nucleotide exchange factor 1 (GEA1) from Saccharomyces cerevisiae (strain ATCC 204508 / S288c) (Baker's yeast).